The chain runs to 259 residues: Snake venom serine protease homolog rhinocerase 3 (259 aa).

Positions 1–17 (VLIRVLANLLLLQLSYA) are cleaved as a signal peptide. A propeptide spanning residues 18–23 (QESSEL) is cleaved from the precursor. Residues 24-250 (VIGGDECDIN…YTDWIEGIIA (227 aa)) form the Peptidase S1 domain. Cystine bridges form between cysteine 30-cysteine 164, cysteine 51-cysteine 67, cysteine 99-cysteine 257, cysteine 143-cysteine 211, cysteine 175-cysteine 190, and cysteine 201-cysteine 226. N-linked (GlcNAc...) asparagine glycosylation is present at asparagine 80. N-linked (GlcNAc...) asparagine glycosylation is present at asparagine 252.

It belongs to the peptidase S1 family. Snake venom subfamily. In terms of tissue distribution, expressed by the venom gland.

It is found in the secreted. In terms of biological role, snake venom serine protease homolog that may act in the hemostasis system of the prey. The protein is Snake venom serine protease homolog rhinocerase 3 of Bitis rhinoceros (West African gaboon viper).